The following is a 93-amino-acid chain: Protein salt-induced and EIN3/EIL1-dependent 1 (93 aa).

A compositionally biased stretch (low complexity) spans 23 to 36 (SSLLTESSSSSLCS). The disordered stretch occupies residues 23–46 (SSLLTESSSSSLCSEEAEGGGGEA).

With respect to regulation, triggered by EIN3. In terms of biological role, involved in ethylene-dependent salt stress responses by reducing reactive oxygen species (ROS) accumulation. In Arabidopsis thaliana (Mouse-ear cress), this protein is Protein salt-induced and EIN3/EIL1-dependent 1.